A 372-amino-acid chain; its full sequence is Alanine dehydrogenase 2 (372 aa).

The active site involves histidine 95. Residue 169–199 (KVTIIGGGQAGTNAAKIALGLGADVTILDVN) coordinates NAD(+).

It belongs to the AlaDH/PNT family.

The catalysed reaction is L-alanine + NAD(+) + H2O = pyruvate + NH4(+) + NADH + H(+). The protein operates within amino-acid degradation; L-alanine degradation via dehydrogenase pathway; NH(3) and pyruvate from L-alanine: step 1/1. May play a role in cell wall synthesis as L-alanine is an important constituent of the peptidoglycan layer. This is Alanine dehydrogenase 2 (ald2) from Staphylococcus aureus (strain COL).